The sequence spans 194 residues: ATP-dependent Clp protease proteolytic subunit (194 aa).

S98 acts as the Nucleophile in catalysis. Residue H123 is part of the active site.

This sequence belongs to the peptidase S14 family. Fourteen ClpP subunits assemble into 2 heptameric rings which stack back to back to give a disk-like structure with a central cavity, resembling the structure of eukaryotic proteasomes.

The protein resides in the cytoplasm. It catalyses the reaction Hydrolysis of proteins to small peptides in the presence of ATP and magnesium. alpha-casein is the usual test substrate. In the absence of ATP, only oligopeptides shorter than five residues are hydrolyzed (such as succinyl-Leu-Tyr-|-NHMec, and Leu-Tyr-Leu-|-Tyr-Trp, in which cleavage of the -Tyr-|-Leu- and -Tyr-|-Trp bonds also occurs).. Functionally, cleaves peptides in various proteins in a process that requires ATP hydrolysis. Has a chymotrypsin-like activity. Plays a major role in the degradation of misfolded proteins. The polypeptide is ATP-dependent Clp protease proteolytic subunit (Staphylococcus epidermidis (strain ATCC 35984 / DSM 28319 / BCRC 17069 / CCUG 31568 / BM 3577 / RP62A)).